Consider the following 168-residue polypeptide: Large ribosomal subunit protein uL10 (168 aa).

Belongs to the universal ribosomal protein uL10 family. Part of the ribosomal stalk of the 50S ribosomal subunit. The N-terminus interacts with L11 and the large rRNA to form the base of the stalk. The C-terminus forms an elongated spine to which L12 dimers bind in a sequential fashion forming a multimeric L10(L12)X complex.

In terms of biological role, forms part of the ribosomal stalk, playing a central role in the interaction of the ribosome with GTP-bound translation factors. This Laribacter hongkongensis (strain HLHK9) protein is Large ribosomal subunit protein uL10.